The primary structure comprises 243 residues: ATP synthase subunit a (243 aa).

The next 8 membrane-spanning stretches (helical) occupy residues 28–48 (SSLYMVLTVVFASLFLFAGVF), 52–72 (VIPGPMQSFVEIVCSFVLGII), 83–103 (YFPLILSVFLYVLFANLVGML), 114–134 (HIVVTLALAMVVFIFVTLIGL), 141–161 (FFAMFLPDGTPNWIAPLMIFL), 177–197 (LTANMIAGHTILKVIAGFVYP), 200–220 (LLISPLSFLFVVVLIVFEVFI), and 221–241 (AMLQAYIFVMLTCVYLNDSLF).

This sequence belongs to the ATPase A chain family. As to quaternary structure, F-type ATPases have 2 components, CF(1) - the catalytic core - and CF(0) - the membrane proton channel. CF(1) has five subunits: alpha(3), beta(3), gamma(1), delta(1), epsilon(1). CF(0) has three main subunits: a(1), b(2) and c(9-12). The alpha and beta chains form an alternating ring which encloses part of the gamma chain. CF(1) is attached to CF(0) by a central stalk formed by the gamma and epsilon chains, while a peripheral stalk is formed by the delta and b chains.

It localises to the cell inner membrane. Its function is as follows. Key component of the proton channel; it plays a direct role in the translocation of protons across the membrane. The polypeptide is ATP synthase subunit a (Neorickettsia sennetsu (strain ATCC VR-367 / Miyayama) (Ehrlichia sennetsu)).